Reading from the N-terminus, the 172-residue chain is Single-stranded DNA-binding protein A (172 aa).

The 104-residue stretch at 1 to 104 folds into the SSB domain; that stretch reads MLNRVVLVGR…VQAESVQFLE (104 aa). Tyrosine 82 bears the Phosphotyrosine mark. Residues 103–172 form a disordered region; it reads LEPKNGGGSG…IDISDDDLPF (70 aa). Residues 107–131 are compositionally biased toward gly residues; that stretch reads NGGGSGSGGYNEGNSGGGQYFGGGQ. Low complexity predominate over residues 132 to 149; it reads NDNPFGGNQNNQRRNQGN. Positions 167-172 match the Important for interaction with partner proteins motif; sequence DDDLPF.

In terms of assembly, homotetramer. Interacts with proteins involved in DNA metabolism such as PriA, RecQ, RecG, RecS, DnaE, RarA, RecJ, RecO, SbcC, RecD2 (formerly YrrC), XseA and Ung. Interacts with RecQ via its 10 C-terminal residues. Interacts with RecD2. Post-translationally, phosphorylated by YwqD, which increases ssDNA affinity; dephosphorylated by YwqE.

Its subcellular location is the cytoplasm. The protein localises to the nucleoid. In terms of biological role, plays an important role in DNA replication, recombination and repair. Binds to single-stranded (ss)DNA and to an array of partner proteins to recruit them to their sites of action during DNA metabolism. Associates with oriC, this requires DnaA. SsbA binding to ssDNA prevents DnaB and DnaD individually from binding to DNA. Has a 20-fold higher affinity for ssDNA than SsbB; SsbA and DprA activate the homologous DNA strand exchange function of RecA-ATP. Enhances the activity of 3'-5' DNA helicase RecQ. The sequence is that of Single-stranded DNA-binding protein A (ssbA) from Bacillus subtilis (strain 168).